We begin with the raw amino-acid sequence, 334 residues long: MMTNLNVRTIKGCFPGSLPDALNDMSVINHILSLTGRFDEGQAALASTVNVVYVGTAVYDIPRYREEYTKNFIARGCGISEVCVAEARSTGATPCAAATMVTPDQLQHLAEAHIILLPEVTPFSLYDAGRKRASMRVSGQVAARGVVLVGGGCCFRAEHSDSANPKTCAQYMLSRENEVDSGRPVEMEEGGAKWEYLCVHGLSVLPGIFCPQHSSRDATGLLLNESFSKMLKRHPTERGIGVDCRAVLLLMGDGRYQVLTIANREGRTASVKDINIQIKDVVEGNVQTTTIQQQGSVEELLRKPCGPVVRDPFEAYYAMANPTALTEKLLCAPR.

The protein belongs to the cyclin family. Cyclin AB subfamily.

Essential for the control of the cell cycle at the G2/M (mitosis) transition. The polypeptide is G2/mitotic-specific cyclin-1 (CYC1) (Trypanosoma brucei brucei).